Here is a 312-residue protein sequence, read N- to C-terminus: tRNA dimethylallyltransferase (312 aa).

17-24 is an ATP binding site; sequence GPTASGKT. A substrate-binding site is contributed by 19-24; sequence TASGKT. Interaction with substrate tRNA stretches follow at residues 42–45, 166–170, and 247–252; these read DSAL, QRLLR, and RCVGYR.

It belongs to the IPP transferase family. In terms of assembly, monomer. Requires Mg(2+) as cofactor.

It catalyses the reaction adenosine(37) in tRNA + dimethylallyl diphosphate = N(6)-dimethylallyladenosine(37) in tRNA + diphosphate. Catalyzes the transfer of a dimethylallyl group onto the adenine at position 37 in tRNAs that read codons beginning with uridine, leading to the formation of N6-(dimethylallyl)adenosine (i(6)A). The sequence is that of tRNA dimethylallyltransferase from Sodalis glossinidius (strain morsitans).